The chain runs to 214 residues: MIKEAIKIQGTKEGLVIVLEEDVDIETLKEKIVNRIEKSLKFFEGATLTVRVKSLSVKEEKLQELKDVIFEKYGIEVRIKNFQEKHIKNVTDDEIFNGLEEGITKFHKGTVRSGQVVKYHGNLVIIGDVNPGGLVQAAGNIVVMGTLRGIAHAGFTGNKEAVIVASSLRAMQLRIANVISRAPDKDDASDYPEIAVVKKGKIIVKPLYHLNDLW.

Belongs to the MinC family. In terms of assembly, interacts with MinD and FtsZ.

Cell division inhibitor that blocks the formation of polar Z ring septums. Rapidly oscillates between the poles of the cell to destabilize FtsZ filaments that have formed before they mature into polar Z rings. Prevents FtsZ polymerization. This Thermoanaerobacter pseudethanolicus (strain ATCC 33223 / 39E) (Clostridium thermohydrosulfuricum) protein is Probable septum site-determining protein MinC.